The chain runs to 497 residues: Methionine--tRNA ligase (497 aa).

Positions Y14–H24 match the 'HIGH' region motif. Residues C129, C132, C147, and H150 each coordinate Zn(2+). The 'KMSKS' region motif lies at K295–T299. K298 is an ATP binding site.

It belongs to the class-I aminoacyl-tRNA synthetase family. MetG type 2A subfamily. As to quaternary structure, monomer. Zn(2+) is required as a cofactor.

It is found in the cytoplasm. The enzyme catalyses tRNA(Met) + L-methionine + ATP = L-methionyl-tRNA(Met) + AMP + diphosphate. Its function is as follows. Is required not only for elongation of protein synthesis but also for the initiation of all mRNA translation through initiator tRNA(fMet) aminoacylation. This Aquifex aeolicus (strain VF5) protein is Methionine--tRNA ligase (metG).